Consider the following 67-residue polypeptide: MSLFPVIVVFGLSFPPIFFELLLSLAIFWLVRRMLVPTGIYDFVWHPALFNTALYCCLFYLISRLFV.

2 helical membrane-spanning segments follow: residues 3–23 (LFPVIVVFGLSFPPIFFELLL) and 43–63 (FVWHPALFNTALYCCLFYLIS).

It belongs to the AaeX family.

Its subcellular location is the cell membrane. The chain is Protein AaeX from Salmonella agona (strain SL483).